The chain runs to 342 residues: Ferredoxin--NADP reductase (342 aa).

Residues C17, D36, Q44, Y49, V89, F124, D289, and T330 each contribute to the FAD site.

The protein belongs to the ferredoxin--NADP reductase type 2 family. In terms of assembly, homodimer. It depends on FAD as a cofactor.

It carries out the reaction 2 reduced [2Fe-2S]-[ferredoxin] + NADP(+) + H(+) = 2 oxidized [2Fe-2S]-[ferredoxin] + NADPH. In Nitrobacter winogradskyi (strain ATCC 25391 / DSM 10237 / CIP 104748 / NCIMB 11846 / Nb-255), this protein is Ferredoxin--NADP reductase.